The sequence spans 517 residues: Ribonuclease Y (517 aa).

The helical transmembrane segment at 1-21 (MIESLIALIAAIVGLGIGYLV) threads the bilayer. The KH domain occupies 207-273 (LINVINIKND…TKVIELLVED (67 aa)). Residues 333-426 (ALAHSLEVAH…VCAADTLSAA (94 aa)) form the HD domain.

The protein belongs to the RNase Y family.

Its subcellular location is the cell membrane. Endoribonuclease that initiates mRNA decay. The chain is Ribonuclease Y from Campylobacter jejuni subsp. doylei (strain ATCC BAA-1458 / RM4099 / 269.97).